Consider the following 233-residue polypeptide: Adenosine 5'-phosphosulfate reductase (233 aa).

[4Fe-4S] cluster contacts are provided by Cys-120, Cys-121, Cys-203, and Cys-206. Cys-229 (nucleophile; cysteine thiosulfonate intermediate) is an active-site residue.

It belongs to the PAPS reductase family. CysH subfamily. [4Fe-4S] cluster is required as a cofactor.

It localises to the cytoplasm. It carries out the reaction [thioredoxin]-disulfide + sulfite + AMP + 2 H(+) = adenosine 5'-phosphosulfate + [thioredoxin]-dithiol. It participates in sulfur metabolism; hydrogen sulfide biosynthesis; sulfite from sulfate. Its function is as follows. Catalyzes the formation of sulfite from adenosine 5'-phosphosulfate (APS) using thioredoxin as an electron donor. The polypeptide is Adenosine 5'-phosphosulfate reductase (Lysinibacillus sphaericus (strain C3-41)).